The sequence spans 447 residues: Tubulin alpha chain (447 aa).

GTP contacts are provided by Q11, E71, G144, T145, T179, N206, and N228. E71 lines the Mg(2+) pocket. E254 is a catalytic residue.

It belongs to the tubulin family. As to quaternary structure, dimer of alpha and beta chains. A typical microtubule is a hollow water-filled tube with an outer diameter of 25 nm and an inner diameter of 15 nM. Alpha-beta heterodimers associate head-to-tail to form protofilaments running lengthwise along the microtubule wall with the beta-tubulin subunit facing the microtubule plus end conferring a structural polarity. Microtubules usually have 13 protofilaments but different protofilament numbers can be found in some organisms and specialized cells. Requires Mg(2+) as cofactor.

The protein localises to the cytoplasm. The protein resides in the cytoskeleton. It catalyses the reaction GTP + H2O = GDP + phosphate + H(+). Functionally, tubulin is the major constituent of microtubules, a cylinder consisting of laterally associated linear protofilaments composed of alpha- and beta-tubulin heterodimers. Microtubules grow by the addition of GTP-tubulin dimers to the microtubule end, where a stabilizing cap forms. Below the cap, tubulin dimers are in GDP-bound state, owing to GTPase activity of alpha-tubulin. This is Tubulin alpha chain (TUBA) from Avena sativa (Oat).